The chain runs to 1612 residues: uncharacterized protein (1612 aa).

A coiled-coil region spans residues 23–52 (ENKNIEMTTLKDKKEMKNENLSKINVKKEN). The span at 46 to 93 (INVKKENHDKNHDKNHDKNHDKNHDKNHDKNHDKNHDKNHDKNHDKNH) shows a compositional bias: basic and acidic residues. Disordered stretches follow at residues 46–94 (INVK…KNHV) and 369–400 (EDDNKSDNPLYSNNNTLKEQNTSTPLPSHEIQ). Positions 375-394 (DNPLYSNNNTLKEQNTSTPL) are enriched in polar residues. Residues 479-499 (FIVTLSEICLILTPHYVNIIN) form a helical membrane-spanning segment. Disordered regions lie at residues 698–777 (TSLT…EKKL), 992–1037 (NELD…KNDP), 1091–1157 (SGKS…RNMS), and 1257–1291 (NQTTNNNTYNNQTSNHMNENLHTDESSKSNNNQDK). Positions 708–777 (KNDEIKKTGE…KKKTGEEKKL (70 aa)) are enriched in basic and acidic residues. Low complexity-rich tracts occupy residues 996-1028 (NNNNKNNNNNKNNNNNKNNNNNNNNNNNNNNNN), 1102-1140 (SNNNNNVNNMNNNMNNNMNNNMNNHMNSNNNVVDSNSTN), and 1257-1271 (NQTTNNNTYNNQTSN). 3 coiled-coil regions span residues 1338-1362 (YCNNKNKNKNKNKNKNKNMEQINNK), 1444-1469 (SNKKILIEKLIDKLDDYKKKINIDND), and 1553-1601 (NMED…KFLT). Residues 1554-1566 (MEDEKNEKLNDKE) show a composition bias toward basic and acidic residues. Positions 1554–1612 (MEDEKNEKLNDKEGEYEDVTENLNEQEAEEEAEEEAEEEEEEEDKFLTPEHLPINVEIK) are disordered. Acidic residues predominate over residues 1567–1597 (GEYEDVTENLNEQEAEEEAEEEAEEEEEEED).

It localises to the membrane. This is an uncharacterized protein from Plasmodium falciparum (isolate 3D7).